The sequence spans 617 residues: Cytoplasmic polyadenylation element-binding protein 1 (617 aa).

The segment at 1–38 (MQSQLKACGDAPAPSCSLHHRRTISKKPSNGGNSGGGG) is disordered. RRM domains follow at residues 273–377 (RKVF…AWRL) and 394–465 (RTVF…HADT). Disordered regions lie at residues 534 to 568 (DQTR…QNVT) and 592 to 617 (NQNN…AIGY). Positions 542–563 (PPHHSTSHYHHRSTPSHHHNHT) are enriched in basic residues.

Interacts with fbf-1.

Functionally, cytoplasmic polyadenylation element binding protein that binds to and regulates the translation of specific mRNAs. Essential for progression through meiosis. Involved in spermatogenesis. This Caenorhabditis japonica protein is Cytoplasmic polyadenylation element-binding protein 1 (cpb-1).